A 121-amino-acid polypeptide reads, in one-letter code: MQNRIEIAEATLKEDRLILTTKSEEQIQKAKASGQMLVDSDHFAFVYILENEESFSYLILGEDTWAPLKEAMTLDIPVYLAAEGHSLELIQLHQELHYLIDNIKDNANYGDMEEKVKSTFL.

The protein belongs to the UPF0738 family.

This chain is UPF0738 protein BPUM_1088, found in Bacillus pumilus (strain SAFR-032).